The primary structure comprises 221 residues: Ribosomal RNA small subunit methyltransferase G (221 aa).

3 residues coordinate S-adenosyl-L-methionine: Gly-78, Phe-83, and Arg-150.

Belongs to the methyltransferase superfamily. RNA methyltransferase RsmG family.

It localises to the cytoplasm. Specifically methylates the N7 position of a guanine in 16S rRNA. This is Ribosomal RNA small subunit methyltransferase G from Bifidobacterium longum (strain DJO10A).